We begin with the raw amino-acid sequence, 246 residues long: Putative 4'-phosphopantetheinyl transferase slr0495 (246 aa).

The Mg(2+) site is built by Asp110 and Glu156.

The protein belongs to the P-Pant transferase superfamily. Gsp/Sfp/HetI/AcpT family. Requires Mg(2+) as cofactor.

In terms of biological role, probably transfers the 4'-phosphopantetheine moiety from coenzyme A (CoA) to a serine residue of a carrier protein domain. This Synechocystis sp. (strain ATCC 27184 / PCC 6803 / Kazusa) protein is Putative 4'-phosphopantetheinyl transferase slr0495.